Consider the following 274-residue polypeptide: MNKKSPDTEKVSNYDYLEKMNTFELLSNINKEDHTIAENVKKQIPSIEKLVDEIIPRIDSGGRLFYIGAGTSGRLGVLDASECPPTFGVSPGIVIGLIAGGDTALRNAVENAEDDTNQAWKDLQEYDISEKDVLVGIAASGTTPYVIGGIKDARNNGIITGCITCSSGSPLAEASEYPIEVVTGPEFVTGSTRMKAGTAQKLVLNMISTSVMIKLGRVKGNKMVDMQLSNDKLVGRGIRMIMEDLNIEKEQAEKLLLEHKSVRKVLDAHKNERN.

The 164-residue stretch at 54–217 (IIPRIDSGGR…STSVMIKLGR (164 aa)) folds into the SIS domain. Glutamate 82 acts as the Proton donor in catalysis. Residue glutamate 113 is part of the active site.

Belongs to the GCKR-like family. MurNAc-6-P etherase subfamily. In terms of assembly, homodimer.

The catalysed reaction is N-acetyl-D-muramate 6-phosphate + H2O = N-acetyl-D-glucosamine 6-phosphate + (R)-lactate. It participates in amino-sugar metabolism; N-acetylmuramate degradation. Functionally, specifically catalyzes the cleavage of the D-lactyl ether substituent of MurNAc 6-phosphate, producing GlcNAc 6-phosphate and D-lactate. The chain is N-acetylmuramic acid 6-phosphate etherase from Christiangramia forsetii (strain DSM 17595 / CGMCC 1.15422 / KT0803) (Gramella forsetii).